Here is a 482-residue protein sequence, read N- to C-terminus: Anaerobic nitric oxide reductase flavorubredoxin (482 aa).

Positions 30–210 (LRGSSYNSYL…PFSRLVTPKI (181 aa)) are zinc metallo-hydrolase. Positions 79, 81, 83, 147, 166, and 227 each coordinate Fe cation. One can recognise a Flavodoxin-like domain in the interval 254–393 (ITIFYDTMSN…LCRQHGRDIA (140 aa)). FMN is bound by residues 260-264 (TMSNN) and 342-369 (AFGS…EMSL). Residues 426-477 (GPSMQCSVCQWIYDPAKGEPLQDVAPGTPWSDVPDNFLCPECSLGKDVFDVL) form the Rubredoxin-like domain. Residues Cys-431, Cys-434, Cys-464, and Cys-467 each contribute to the Fe cation site.

In the N-terminal section; belongs to the zinc metallo-hydrolase group 3 family. As to quaternary structure, homotetramer. Fe cation is required as a cofactor. FMN serves as cofactor.

The protein resides in the cytoplasm. The protein operates within nitrogen metabolism; nitric oxide reduction. Functionally, anaerobic nitric oxide reductase; uses NADH to detoxify nitric oxide (NO), protecting several 4Fe-4S NO-sensitive enzymes. Has at least 2 reductase partners, only one of which (NorW, flavorubredoxin reductase) has been identified. NO probably binds to the di-iron center; electrons enter from the NorW at rubredoxin and are transferred sequentially to the FMN center and the di-iron center. Also able to function as an aerobic oxygen reductase. This chain is Anaerobic nitric oxide reductase flavorubredoxin, found in Citrobacter koseri (strain ATCC BAA-895 / CDC 4225-83 / SGSC4696).